Here is a 141-residue protein sequence, read N- to C-terminus: uncharacterized protein (141 aa).

The next 3 membrane-spanning stretches (helical) occupy residues leucine 32–isoleucine 52, isoleucine 69–phenylalanine 89, and phenylalanine 109–tyrosine 129.

It localises to the cell membrane. This is an uncharacterized protein from Methanocaldococcus jannaschii (strain ATCC 43067 / DSM 2661 / JAL-1 / JCM 10045 / NBRC 100440) (Methanococcus jannaschii).